The following is a 382-amino-acid chain: MKALHFGAGNIGRGFIGKLLADAGIQLTFADVNQVVLDALNARHSYQVHVVGETEQVDTVSGVNAVSSIGDDVVDLIAQVDLVTTAVGPVVLERIAPAIAKGLVKRKEQGNESPLNIIACENMVRGTTQLKGHVMNALPEDAKAWVEEHVGFVDSAVDRIVPPSASATNDPLEVTVETFSEWIVDKTQFKGALPNIPGMELTDNLMAFVERKLFTLNTGHAITAYLGKLAGHQTIRDAILDEKIRAVVKGAMEESGAVLIKRYGFDADKHAAYIQKILGRFENPYLKDDVERVGRQPLRKLSAGDRLIKPLLGTLEYSLPHKNLIQGIAGAMHFRSEDDPQAQELAALIADKGPQAALAQISDLDANSEVVSEAVTAYKAMQ.

Residue 3 to 14 (ALHFGAGNIGRG) participates in NAD(+) binding. Position 269 is an N6-acetyllysine (Lys-269).

The protein belongs to the mannitol dehydrogenase family.

It carries out the reaction D-mannitol 1-phosphate + NAD(+) = beta-D-fructose 6-phosphate + NADH + H(+). In Shigella sonnei (strain Ss046), this protein is Mannitol-1-phosphate 5-dehydrogenase.